Consider the following 374-residue polypeptide: Conserved virulence factor C (374 aa).

The protein belongs to the CvfC family.

In terms of biological role, required for hemolysin production. Contributes to virulence in both silkworm-infection model and mice. The polypeptide is Conserved virulence factor C (cvfC) (Staphylococcus aureus (strain NCTC 8325 / PS 47)).